Reading from the N-terminus, the 70-residue chain is MRANELQELRVNTAQELSAKLNDLKAELFNLRFQLATGQLENPMRIRQVKKSIAQVKTILREKELKVIEQ.

This sequence belongs to the universal ribosomal protein uL29 family.

The sequence is that of Large ribosomal subunit protein uL29 from Clostridium novyi (strain NT).